Reading from the N-terminus, the 465-residue chain is Juvenile hormone epoxide hydrolase 2 (465 aa).

The helical transmembrane segment at 7–27 (ILWIAIVIGLGVLYYEITKEF) threads the bilayer. Catalysis depends on Asp-224, which acts as the Nucleophile. Tyr-370 acts as the Proton donor in catalysis. His-427 serves as the catalytic Proton acceptor.

The protein belongs to the peptidase S33 family.

The protein resides in the microsome membrane. It is found in the endoplasmic reticulum membrane. The enzyme catalyses cis-stilbene oxide + H2O = (1R,2R)-hydrobenzoin. It catalyses the reaction 1-(4-methoxyphenyl)-N-methyl-N-[(3-methyloxetan-3-yl)methyl]methanamine + H2O = 2-{[(4-methoxybenzyl)(methyl)amino]methyl}-2-methylpropane-1,3-diol. Catalyzes juvenile hormone hydrolysis. This is Juvenile hormone epoxide hydrolase 2 from Ctenocephalides felis (Cat flea).